We begin with the raw amino-acid sequence, 459 residues long: Argininosuccinate lyase (459 aa).

Belongs to the lyase 1 family. Argininosuccinate lyase subfamily.

It localises to the cytoplasm. It catalyses the reaction 2-(N(omega)-L-arginino)succinate = fumarate + L-arginine. It functions in the pathway amino-acid biosynthesis; L-arginine biosynthesis; L-arginine from L-ornithine and carbamoyl phosphate: step 3/3. This is Argininosuccinate lyase from Lactococcus lactis subsp. cremoris (strain SK11).